The primary structure comprises 139 residues: HTH-type transcriptional repressor Mb2911 (139 aa).

Residues 6–138 (DAPLGYLLYR…FKRMLEKLGS (133 aa)) enclose the HTH marR-type domain.

In terms of assembly, homodimer.

Represses expression of the HQNO methyltransferase htm gene by binding to its promoter region. This Mycobacterium bovis (strain ATCC BAA-935 / AF2122/97) protein is HTH-type transcriptional repressor Mb2911.